A 334-amino-acid polypeptide reads, in one-letter code: D-fructose 1,6-bisphosphatase class 2/sedoheptulose 1,7-bisphosphatase (334 aa).

Residues D33, E57, D85, and E88 each contribute to the Mn(2+) site. Substrate contacts are provided by residues 88–90 (EGT), Y119, 164–166 (RAR), and 186–188 (DGD). E213 is a Mn(2+) binding site.

Belongs to the FBPase class 2 family. As to quaternary structure, homotetramer. Requires Mn(2+) as cofactor.

It carries out the reaction beta-D-fructose 1,6-bisphosphate + H2O = beta-D-fructose 6-phosphate + phosphate. The catalysed reaction is D-sedoheptulose 1,7-bisphosphate + H2O = D-sedoheptulose 7-phosphate + phosphate. It participates in carbohydrate biosynthesis; Calvin cycle. Its function is as follows. Catalyzes the hydrolysis of fructose 1,6-bisphosphate (Fru 1,6-P2) and sedoheptulose 1,7-bisphosphate (Sed 1,7-P2) to fructose 6-phosphate and sedoheptulose 7-phosphate, respectively. The sequence is that of D-fructose 1,6-bisphosphatase class 2/sedoheptulose 1,7-bisphosphatase from Prochlorococcus marinus (strain MIT 9303).